Here is a 247-residue protein sequence, read N- to C-terminus: Sulfate transporter CysZ (247 aa).

The next 5 membrane-spanning stretches (helical) occupy residues 29–49 (FVVL…FYLF), 66–86 (FLSW…LATF), 141–160 (LLYI…IPAL), 164–186 (VGPV…DYPF), and 212–232 (VLVS…PVAI).

It belongs to the CysZ family.

It is found in the cell inner membrane. Its function is as follows. High affinity, high specificity proton-dependent sulfate transporter, which mediates sulfate uptake. Provides the sulfur source for the cysteine synthesis pathway. The polypeptide is Sulfate transporter CysZ (Vibrio parahaemolyticus serotype O3:K6 (strain RIMD 2210633)).